The primary structure comprises 241 residues: Pyridoxine 5'-phosphate synthase (241 aa).

N7 lines the 3-amino-2-oxopropyl phosphate pocket. 9–10 (DH) lines the 1-deoxy-D-xylulose 5-phosphate pocket. R18 is a 3-amino-2-oxopropyl phosphate binding site. The active-site Proton acceptor is the H43. Residues R45 and H50 each coordinate 1-deoxy-D-xylulose 5-phosphate. Catalysis depends on E70, which acts as the Proton acceptor. T100 provides a ligand contact to 1-deoxy-D-xylulose 5-phosphate. H191 acts as the Proton donor in catalysis. 3-amino-2-oxopropyl phosphate is bound by residues G192 and 213-214 (GH).

The protein belongs to the PNP synthase family. Homooctamer; tetramer of dimers.

The protein resides in the cytoplasm. It catalyses the reaction 3-amino-2-oxopropyl phosphate + 1-deoxy-D-xylulose 5-phosphate = pyridoxine 5'-phosphate + phosphate + 2 H2O + H(+). The protein operates within cofactor biosynthesis; pyridoxine 5'-phosphate biosynthesis; pyridoxine 5'-phosphate from D-erythrose 4-phosphate: step 5/5. In terms of biological role, catalyzes the complicated ring closure reaction between the two acyclic compounds 1-deoxy-D-xylulose-5-phosphate (DXP) and 3-amino-2-oxopropyl phosphate (1-amino-acetone-3-phosphate or AAP) to form pyridoxine 5'-phosphate (PNP) and inorganic phosphate. The protein is Pyridoxine 5'-phosphate synthase of Nitrosospira multiformis (strain ATCC 25196 / NCIMB 11849 / C 71).